A 354-amino-acid polypeptide reads, in one-letter code: Hyaluronan and proteoglycan link protein 1 (354 aa).

The propeptide occupies 1–9; the sequence is MRSLLFLVL. The 115-residue stretch at 38 to 152 folds into the Ig-like V-type domain; sequence PRLLVEAEQA…EGLEDDTAVV (115 aa). Asparagine 56 is a glycosylation site (N-linked (GlcNAc...) asparagine). Intrachain disulfides connect cysteine 61-cysteine 139, cysteine 181-cysteine 252, cysteine 205-cysteine 226, cysteine 279-cysteine 349, and cysteine 304-cysteine 325. 2 Link domains span residues 159–254 and 259–351; these read VVFP…FCFT and GRFY…YCFR.

It belongs to the HAPLN family.

The protein resides in the secreted. It localises to the extracellular space. Its subcellular location is the extracellular matrix. Its function is as follows. Stabilizes the aggregates of proteoglycan monomers with hyaluronic acid in the extracellular cartilage matrix. This is Hyaluronan and proteoglycan link protein 1 (Hapln1) from Rattus norvegicus (Rat).